The following is a 471-amino-acid chain: Mitochondrial distribution and morphology protein 10 (471 aa).

Disordered stretches follow at residues 272–291 (TEMP…SNHG), 374–394 (ADTP…DEEN), and 436–455 (SWAA…GGVS). Residues 276–288 (SSSSSTSSTTTTS) show a composition bias toward low complexity. The span at 444–455 (AGGGQSVGGGVS) shows a compositional bias: gly residues.

Belongs to the MDM10 family. As to quaternary structure, component of the ER-mitochondria encounter structure (ERMES) or MDM complex, composed of mmm1, mdm10, mdm12 and mdm34. Associates with the mitochondrial outer membrane sorting assembly machinery SAM(core) complex.

It is found in the mitochondrion outer membrane. Functionally, component of the ERMES/MDM complex, which serves as a molecular tether to connect the endoplasmic reticulum and mitochondria. Components of this complex are involved in the control of mitochondrial shape and protein biogenesis and may function in phospholipid exchange. mdm10 is involved in the late assembly steps of the general translocase of the mitochondrial outer membrane (TOM complex). Functions in the tom40-specific route of the assembly of outer membrane beta-barrel proteins, including the association of tom40 with the receptor tom22 and small TOM proteins. Can associate with the SAM(core) complex as well as the mdm12-mmm1 complex, both involved in late steps of the major beta-barrel assembly pathway, that is responsible for biogenesis of all outer membrane beta-barrel proteins. May act as a switch that shuttles between both complexes and channels precursor proteins into the tom40-specific pathway. Plays a role in mitochondrial morphology and in the inheritance of mitochondria. This Neosartorya fischeri (strain ATCC 1020 / DSM 3700 / CBS 544.65 / FGSC A1164 / JCM 1740 / NRRL 181 / WB 181) (Aspergillus fischerianus) protein is Mitochondrial distribution and morphology protein 10 (mdmB).